The chain runs to 174 residues: NADH-ubiquinone oxidoreductase chain 6 (174 aa).

4 helical membrane-spanning segments follow: residues 25–45 (SMGL…SIYV), 48–68 (FWFS…LFIY), 82–102 (FSLT…FFMI), and 143–163 (LITL…VKIT).

It belongs to the complex I subunit 6 family.

The protein localises to the mitochondrion membrane. The catalysed reaction is a ubiquinone + NADH + 5 H(+)(in) = a ubiquinol + NAD(+) + 4 H(+)(out). Core subunit of the mitochondrial membrane respiratory chain NADH dehydrogenase (Complex I) that is believed to belong to the minimal assembly required for catalysis. Complex I functions in the transfer of electrons from NADH to the respiratory chain. The immediate electron acceptor for the enzyme is believed to be ubiquinone. The chain is NADH-ubiquinone oxidoreductase chain 6 (ND6) from Anopheles albimanus (New world malaria mosquito).